The chain runs to 86 residues: Small ribosomal subunit protein uS15 (86 aa).

It belongs to the universal ribosomal protein uS15 family. Part of the 30S ribosomal subunit. Forms a bridge to the 50S subunit in the 70S ribosome, contacting the 23S rRNA.

In terms of biological role, one of the primary rRNA binding proteins, it binds directly to 16S rRNA where it helps nucleate assembly of the platform of the 30S subunit by binding and bridging several RNA helices of the 16S rRNA. Its function is as follows. Forms an intersubunit bridge (bridge B4) with the 23S rRNA of the 50S subunit in the ribosome. The polypeptide is Small ribosomal subunit protein uS15 (Mycoplasma pneumoniae (strain ATCC 29342 / M129 / Subtype 1) (Mycoplasmoides pneumoniae)).